A 458-amino-acid polypeptide reads, in one-letter code: Sulfite efflux pump SSU1 (458 aa).

Over 1 to 11 (MVANWVLALTR) the chain is Cytoplasmic. Residues 12-32 (QFDPFMFMMVMGVGISSNILY) traverse the membrane as a helical segment. Residues 33–48 (SFPYPARWLRICSYIM) lie on the Extracellular side of the membrane. The helical transmembrane segment at 49-69 (FAIACLIFIAVQALQILHLIV) threads the bilayer. Residues 70 to 89 (YIKEKSFREYFNDFFRNMKH) lie on the Cytoplasmic side of the membrane. The helical transmembrane segment at 90-110 (NLFWGTYPMGLVTIINFLGAL) threads the bilayer. Topologically, residues 111–135 (SKANTTKSPTNARNLMIFVYVLWWY) are extracellular. Residues 136–156 (DLAVCLVIAWGISFLIWHDYY) form a helical membrane-spanning segment. Topologically, residues 157-176 (PLEGIGNYPSYNIKMASENM) are cytoplasmic. The chain crosses the membrane as a helical span at residues 177–197 (KSVLLLDIIPLVVVASSCGTF). Over 198 to 220 (TMSEIFFHAFNRNIQLITLVICA) the chain is Extracellular. Residues 221–241 (LTWLHAIIFVFILIAIYFWSL) traverse the membrane as a helical segment. At 242 to 252 (YINKIPPMTQV) the chain is on the cytoplasmic side. A helical transmembrane segment spans residues 253–275 (FTLFLLLGPMGQGSFGVLLLTDN). The Extracellular portion of the chain corresponds to 276–309 (IKKYAGKYYPTDNITREQEILTIAVPWCFKILGM). Residues 310 to 330 (VSAMALLAMGYFFTVISVVSI) traverse the membrane as a helical segment. Topologically, residues 331–350 (LSYYNKKEIENETGKVKRVY) are cytoplasmic. The helical transmembrane segment at 351–371 (TFHKGFWGMTFPMGTMSLGNE) threads the bilayer. Residues 372 to 387 (ELYVQYNQYVPLYAFR) are Extracellular-facing. Residues 388-408 (VLGTIYGGVCVCWSILCLLCT) form a helical membrane-spanning segment. At 409 to 458 (LHEYSKKMLHAARKSSLFSESGTEKTTVSPYNSIESVEESNSALDFTRLA) the chain is on the cytoplasmic side. Phosphoserine is present on residues Ser444, Ser448, and Ser450.

The protein belongs to the tellurite-resistance/dicarboxylate transporter (TDT) family.

Its subcellular location is the cell membrane. Involved in efflux of free sulfite. Mutations in the SSU1 gene cause sensitivity to sulfite. This is Sulfite efflux pump SSU1 (SSU1) from Saccharomyces cerevisiae (strain ATCC 204508 / S288c) (Baker's yeast).